A 116-amino-acid chain; its full sequence is Large ribosomal subunit protein uL23 (116 aa).

Belongs to the universal ribosomal protein uL23 family. Part of the 50S ribosomal subunit. Contacts protein L29, and trigger factor when it is bound to the ribosome.

Functionally, one of the early assembly proteins it binds 23S rRNA. One of the proteins that surrounds the polypeptide exit tunnel on the outside of the ribosome. Forms the main docking site for trigger factor binding to the ribosome. The chain is Large ribosomal subunit protein uL23 from Psychrobacter sp. (strain PRwf-1).